A 3072-amino-acid polypeptide reads, in one-letter code: Platelet binding protein GspB (3072 aa).

An N-terminal signal peptide occupies residues Met-1–Ser-85. Disordered stretches follow at residues Glu-117 to Ser-147, Ser-182 to Val-254, Ser-876 to Ala-909, Ser-936 to Ala-969, Ser-1024 to Ala-2085, Ser-2106 to Ala-2139, Val-2173 to Ala-2223, Ser-2250 to Ala-2595, Thr-2625 to Val-2965, and Ser-3014 to Glu-3045. Over residues Ala-118–Ala-127 the composition is skewed to polar residues. The ser-rich region 1 (SSR1) stretch occupies residues Ser-123–Ser-236. Composition is skewed to low complexity over residues Glu-131 to Ser-147 and Ser-182 to Thr-238. Positions Gln-237–Gly-603 are basic region (BR). The ser-rich region 2 (SSR2) stretch occupies residues Ser-604 to Ser-3028. The segment covering Ser-3014–Ser-3028 has biased composition (low complexity). An LPXTG sorting signal motif is present at residues Leu-3038–Gly-3042. Pentaglycyl murein peptidoglycan amidated threonine is present on Thr-3041. The propeptide at Gly-3042–Asp-3072 is removed by sortase.

This sequence belongs to the serine-rich repeat protein (SRRP) family. As to quaternary structure, both SSR domains in the unglycosylated protein bind to Asp2 and Asp3; glycosylated protein binds less well. Interacts with the human cell surface glycoprotein GP1BA. Post-translationally, proteolytically cleaved by a metalloprotease. In terms of processing, both SSR1 and SSR2 domains are glycosylated. A truncated derivative (residues 1-2062) contains 105 nmol per nmol of protein, suggesting at least 10% of the apparent molecular weight is due to carbohydrates. Glucose and N-acetylglucosamine are present in a ratio of 30:73 residues per truncated polypeptide, as well as minor amounts of galactose and N-acetylgalactosamine. Glycosylation occurs intracellularly in the Ser-rich regions SSR1 and SSR2. Glycosylation of SSR2 domain may be required to prevent aggregation of GspB. It is probable that most of the Ser residues in SSR1 and SSR2 are O-GlcNAcylated. Sequential glycosylation by sugar transferases are able to generate complex sugar polymorphisms.

It is found in the secreted. The protein resides in the cell wall. Its function is as follows. Plays a role in virulence and host-pathogen interactions. Mediates binding to human platelets via interaction with the human cell surface glycoprotein GP1BA. Plays a positive role in biofilm formation, possibly by self-association via the basic region (BR). The chain is Platelet binding protein GspB (gspB) from Streptococcus gordonii.